Here is a 220-residue protein sequence, read N- to C-terminus: Endonuclease NucS (220 aa).

The protein belongs to the NucS endonuclease family.

The protein resides in the cytoplasm. In terms of biological role, cleaves both 3' and 5' ssDNA extremities of branched DNA structures. The sequence is that of Endonuclease NucS from Frankia alni (strain DSM 45986 / CECT 9034 / ACN14a).